A 743-amino-acid chain; its full sequence is Alpha-N-acetylglucosaminidase (743 aa).

Positions 1-23 (MEAVAVAAAVGVLLLAGAGGAAG) are cleaved as a signal peptide. N-linked (GlcNAc...) asparagine glycosylation is found at Asn261, Asn272, Asn435, Asn503, Asn526, and Asn532.

Belongs to the glycosyl hydrolase 89 family. Monomer and homodimer. In terms of tissue distribution, liver, ovary, peripheral blood leukocytes, testis, prostate, spleen, colon, lung, placenta and kidney.

It is found in the lysosome. The catalysed reaction is Hydrolysis of terminal non-reducing N-acetyl-D-glucosamine residues in N-acetyl-alpha-D-glucosaminides.. Its function is as follows. Involved in the degradation of heparan sulfate. In Homo sapiens (Human), this protein is Alpha-N-acetylglucosaminidase (NAGLU).